Here is a 325-residue protein sequence, read N- to C-terminus: Foldase protein PrsA (325 aa).

Residues 1-20 (MKLMNKIIVPVTASALLLGA) form the signal peptide. A lipid anchor (N-palmitoyl cysteine) is attached at C21. A lipid anchor (S-diacylglycerol cysteine) is attached at C21. The PpiC domain occupies 139 to 245 (ENSKKASHIL…YGYHIIKADK (107 aa)). 2 disordered regions span residues 159-202 (EGLS…KKDG) and 303-325 (PDKI…NSGS).

This sequence belongs to the PrsA family.

The protein localises to the cell membrane. The enzyme catalyses [protein]-peptidylproline (omega=180) = [protein]-peptidylproline (omega=0). Its function is as follows. Plays a major role in protein secretion by helping the post-translocational extracellular folding of several secreted proteins. In Staphylococcus epidermidis (strain ATCC 12228 / FDA PCI 1200), this protein is Foldase protein PrsA.